We begin with the raw amino-acid sequence, 402 residues long: Arginine biosynthesis bifunctional protein ArgJ (402 aa).

The substrate site is built by threonine 149, lysine 175, threonine 186, glutamate 266, asparagine 397, and threonine 402. The active-site Nucleophile is threonine 186.

Belongs to the ArgJ family. As to quaternary structure, heterotetramer of two alpha and two beta chains.

Its subcellular location is the cytoplasm. It catalyses the reaction N(2)-acetyl-L-ornithine + L-glutamate = N-acetyl-L-glutamate + L-ornithine. It carries out the reaction L-glutamate + acetyl-CoA = N-acetyl-L-glutamate + CoA + H(+). Its pathway is amino-acid biosynthesis; L-arginine biosynthesis; L-ornithine and N-acetyl-L-glutamate from L-glutamate and N(2)-acetyl-L-ornithine (cyclic): step 1/1. The protein operates within amino-acid biosynthesis; L-arginine biosynthesis; N(2)-acetyl-L-ornithine from L-glutamate: step 1/4. Its function is as follows. Catalyzes two activities which are involved in the cyclic version of arginine biosynthesis: the synthesis of N-acetylglutamate from glutamate and acetyl-CoA as the acetyl donor, and of ornithine by transacetylation between N(2)-acetylornithine and glutamate. This chain is Arginine biosynthesis bifunctional protein ArgJ, found in Prochlorococcus marinus subsp. pastoris (strain CCMP1986 / NIES-2087 / MED4).